The primary structure comprises 227 residues: MAAEQPLNGAFYGPSVPPPAPKGYYRRGHGRGCGCCLLSLFVKVIISLIVILGVAALIFWLIVRPRAIKFHVTDASLTRFDHTSPDNILRYNLALTVPVRNPNKRIGLYYDRIEAHAYYEGKRFSTITLTPFYQGHKNTTVLTPTFQGQNLVIFNAGQSRTLNAERISGVYNIEIKFRLRVRFKLGDLKFRRIKPKVDCDDLRLPLSTSNGTTTTSTVFPIKCDFDF.

The chain crosses the membrane as a helical span at residues 42 to 62 (VKVIISLIVILGVAALIFWLI). Asn138 and Asn210 each carry an N-linked (GlcNAc...) asparagine glycan.

As to expression, expressed in senescing leaves.

The protein resides in the cell membrane. Functionally, may play a role in plant immunity. This is NDR1/HIN1-like protein 10 from Arabidopsis thaliana (Mouse-ear cress).